Here is a 298-residue protein sequence, read N- to C-terminus: Aspartate carbamoyltransferase catalytic subunit (298 aa).

Carbamoyl phosphate is bound by residues R50 and T51. K79 provides a ligand contact to L-aspartate. 3 residues coordinate carbamoyl phosphate: R100, H128, and Q131. Positions 160 and 221 each coordinate L-aspartate. Carbamoyl phosphate contacts are provided by L260 and P261.

This sequence belongs to the aspartate/ornithine carbamoyltransferase superfamily. ATCase family. In terms of assembly, heterooligomer of catalytic and regulatory chains.

The catalysed reaction is carbamoyl phosphate + L-aspartate = N-carbamoyl-L-aspartate + phosphate + H(+). The protein operates within pyrimidine metabolism; UMP biosynthesis via de novo pathway; (S)-dihydroorotate from bicarbonate: step 2/3. Catalyzes the condensation of carbamoyl phosphate and aspartate to form carbamoyl aspartate and inorganic phosphate, the committed step in the de novo pyrimidine nucleotide biosynthesis pathway. The sequence is that of Aspartate carbamoyltransferase catalytic subunit from Methanosphaerula palustris (strain ATCC BAA-1556 / DSM 19958 / E1-9c).